Reading from the N-terminus, the 250-residue chain is 2,3-bisphosphoglycerate-dependent phosphoglycerate mutase (250 aa).

Residues 8–15, 21–22, Arg60, 87–90, Lys98, and 114–115 each bind substrate; these read RHGESTWN, TG, ERHY, and RR. His9 acts as the Tele-phosphohistidine intermediate in catalysis. Glu87 acts as the Proton donor/acceptor in catalysis. The segment at 116 to 135 is disordered; sequence SYDTPPPPLAANDPRSERSD. Residue 183–184 participates in substrate binding; sequence GN.

It belongs to the phosphoglycerate mutase family. BPG-dependent PGAM subfamily. Homodimer.

The catalysed reaction is (2R)-2-phosphoglycerate = (2R)-3-phosphoglycerate. Its pathway is carbohydrate degradation; glycolysis; pyruvate from D-glyceraldehyde 3-phosphate: step 3/5. Its function is as follows. Catalyzes the interconversion of 2-phosphoglycerate and 3-phosphoglycerate. This is 2,3-bisphosphoglycerate-dependent phosphoglycerate mutase from Polaromonas naphthalenivorans (strain CJ2).